The following is a 385-amino-acid chain: Mitochondrial protein C2orf69 (385 aa).

A mitochondrion-targeting transit peptide spans M1–A24.

Belongs to the C2orf69 family.

It is found in the mitochondrion matrix. In terms of biological role, may play a role in the respiratory chain. The chain is Mitochondrial protein C2orf69 (C2orf69) from Homo sapiens (Human).